The primary structure comprises 388 residues: GTPase Obg (388 aa).

One can recognise an Obg domain in the interval 1–159; sequence MKFVDEATIR…RSLRLELMLL (159 aa). The OBG-type G domain maps to 160–333; sequence ADVGLLGMPN…LALKLLDFID (174 aa). GTP-binding positions include 166–173, 191–195, 213–216, 283–286, and 314–316; these read GMPNAGKS, FTTLV, DIPG, NKAD, and SAY. Positions 173 and 193 each coordinate Mg(2+). A disordered region spans residues 356–377; it reads QNANESVNEDYDDDLDDDDYDD. The span at 362-377 shows a compositional bias: acidic residues; sequence VNEDYDDDLDDDDYDD.

It belongs to the TRAFAC class OBG-HflX-like GTPase superfamily. OBG GTPase family. Monomer. It depends on Mg(2+) as a cofactor.

The protein resides in the cytoplasm. In terms of biological role, an essential GTPase which binds GTP, GDP and possibly (p)ppGpp with moderate affinity, with high nucleotide exchange rates and a fairly low GTP hydrolysis rate. Plays a role in control of the cell cycle, stress response, ribosome biogenesis and in those bacteria that undergo differentiation, in morphogenesis control. This chain is GTPase Obg, found in Shewanella piezotolerans (strain WP3 / JCM 13877).